A 539-amino-acid polypeptide reads, in one-letter code: uncharacterized protein (539 aa).

2 ABC transporter domains span residues 9-276 (LEVK…EFKK) and 288-536 (IKLE…QEMF). ATP contacts are provided by residues 41 to 48 (GKSGAGKS) and 325 to 332 (GTSGAGKT).

It belongs to the ABC transporter superfamily.

This is an uncharacterized protein from Methanocaldococcus jannaschii (strain ATCC 43067 / DSM 2661 / JAL-1 / JCM 10045 / NBRC 100440) (Methanococcus jannaschii).